The primary structure comprises 48 residues: Large ribosomal subunit protein bL32 (48 aa).

A compositionally biased stretch (basic residues) spans 1–20 (MAVPKRRVSKTRAAKRRTHY). Positions 1–48 (MAVPKRRVSKTRAAKRRTHYKVSLPMPVKDKDGSYKMPHRANPTTKEY) are disordered.

Belongs to the bacterial ribosomal protein bL32 family.

The protein is Large ribosomal subunit protein bL32 of Campylobacter jejuni subsp. doylei (strain ATCC BAA-1458 / RM4099 / 269.97).